The sequence spans 549 residues: YTH domain-containing family protein 1 (549 aa).

5 disordered regions span residues 29-102 (QAPW…QPNM), 139-165 (GHPP…RQSG), 243-262 (GASG…QQAV), 273-298 (DSTE…AKGP), and 425-458 (REDS…SENK). A compositionally biased stretch (polar residues) spans 49-61 (VVGQTQSSPQYNG). Over residues 71–102 (QGYYMPQQQQQQQQMPQYYGGPMSPSQPQPNM) the composition is skewed to low complexity. Composition is skewed to polar residues over residues 251–260 (TGPSATTPQQ) and 273–289 (DSTE…TPTA). Residues 307-513 (DRFFVLKSLT…SVGRRLIGLF (207 aa)) form the YTH domain.

The protein belongs to the YTHDF family. YTHDF1 subfamily.

Its function is as follows. Specifically recognizes and binds N6-methyladenosine (m6A)-containing mRNAs, and regulates their stability. M6A is a modification present at internal sites of mRNAs and some non-coding RNAs and plays a role in mRNA stability and processing. Directly interacts with the acid phosphatase APHA mRNA to increase its stability. The chain is YTH domain-containing family protein 1 from Cryphonectria parasitica (strain ATCC 38755 / EP155).